The sequence spans 178 residues: Bifunctional protein PyrR (178 aa).

Residues 99 to 111 (IIIIDDVLYTCRT) carry the PRPP-binding motif.

The protein belongs to the purine/pyrimidine phosphoribosyltransferase family. PyrR subfamily. Homodimer and homohexamer; in equilibrium.

The enzyme catalyses UMP + diphosphate = 5-phospho-alpha-D-ribose 1-diphosphate + uracil. Regulates transcriptional attenuation of the pyrimidine nucleotide (pyr) operon by binding in a uridine-dependent manner to specific sites on pyr mRNA. This disrupts an antiterminator hairpin in the RNA and favors formation of a downstream transcription terminator, leading to a reduced expression of downstream genes. In terms of biological role, also displays a weak uracil phosphoribosyltransferase activity which is not physiologically significant. The chain is Bifunctional protein PyrR from Clostridium beijerinckii (strain ATCC 51743 / NCIMB 8052) (Clostridium acetobutylicum).